A 247-amino-acid chain; its full sequence is Phosphoribosylaminoimidazole-succinocarboxamide synthase (247 aa).

The protein belongs to the SAICAR synthetase family.

The enzyme catalyses 5-amino-1-(5-phospho-D-ribosyl)imidazole-4-carboxylate + L-aspartate + ATP = (2S)-2-[5-amino-1-(5-phospho-beta-D-ribosyl)imidazole-4-carboxamido]succinate + ADP + phosphate + 2 H(+). It participates in purine metabolism; IMP biosynthesis via de novo pathway; 5-amino-1-(5-phospho-D-ribosyl)imidazole-4-carboxamide from 5-amino-1-(5-phospho-D-ribosyl)imidazole-4-carboxylate: step 1/2. This chain is Phosphoribosylaminoimidazole-succinocarboxamide synthase, found in Gloeobacter violaceus (strain ATCC 29082 / PCC 7421).